The primary structure comprises 223 residues: MIF4G domain-containing protein B (223 aa).

The MIF4G domain occupies 9 to 206 (DYKIQGFDAD…LEMIEYRAAG (198 aa)).

The protein belongs to the MIF4GD family. As to quaternary structure, interacts with eif4g1, eif4g2 and slbp; probably tethered by SLBP to the 3'-end of mRNAs ending with the histone stem-loop, it also interacts with eif4g1 which is bound to their 5'-end.

The protein localises to the cytoplasm. It localises to the nucleus. Functions in replication-dependent translation of histone mRNAs which differ from other eukaryotic mRNAs in that they do not end with a poly-A tail but a stem-loop. May participate in circularizing those mRNAs specifically enhancing their translation. The chain is MIF4G domain-containing protein B (mif4gd-b) from Xenopus laevis (African clawed frog).